A 284-amino-acid chain; its full sequence is L-ribulose-5-phosphate 3-epimerase UlaE (284 aa).

This sequence belongs to the L-ribulose-5-phosphate 3-epimerase family.

It catalyses the reaction L-ribulose 5-phosphate = L-xylulose 5-phosphate. It functions in the pathway cofactor degradation; L-ascorbate degradation; D-xylulose 5-phosphate from L-ascorbate: step 3/4. Functionally, catalyzes the isomerization of L-xylulose-5-phosphate to L-ribulose-5-phosphate. Is involved in the anaerobic L-ascorbate utilization. This is L-ribulose-5-phosphate 3-epimerase UlaE from Escherichia coli (strain ATCC 8739 / DSM 1576 / NBRC 3972 / NCIMB 8545 / WDCM 00012 / Crooks).